We begin with the raw amino-acid sequence, 844 residues long: Protein translocase subunit SecA (844 aa).

ATP contacts are provided by residues glutamine 89, 107–111 (GEGKT), and aspartate 497. Zn(2+)-binding residues include cysteine 829, cysteine 831, cysteine 840, and histidine 841.

It belongs to the SecA family. As to quaternary structure, monomer and homodimer. Part of the essential Sec protein translocation apparatus which comprises SecA, SecYEG and auxiliary proteins SecDF. Other proteins may also be involved. Requires Zn(2+) as cofactor.

It localises to the cell membrane. The protein resides in the cytoplasm. It carries out the reaction ATP + H2O + cellular proteinSide 1 = ADP + phosphate + cellular proteinSide 2.. Its function is as follows. Part of the Sec protein translocase complex. Interacts with the SecYEG preprotein conducting channel. Has a central role in coupling the hydrolysis of ATP to the transfer of proteins into and across the cell membrane, serving as an ATP-driven molecular motor driving the stepwise translocation of polypeptide chains across the membrane. The sequence is that of Protein translocase subunit SecA from Streptococcus suis (strain 98HAH33).